A 2572-amino-acid polypeptide reads, in one-letter code: Zinc finger homeobox protein 2 (2572 aa).

2 disordered regions span residues 1–107 (MATL…GLPP) and 343–425 (LSPP…ADDY). The span at 8 to 36 (STTGTTPSPGHNAPSLPSDTFSSSTPSDP) shows a compositional bias: low complexity. Composition is skewed to polar residues over residues 44 to 53 (ASSTSENMRS) and 389 to 398 (LNQSSPTSKE). 2 C2H2-type zinc fingers span residues 453–476 (LKCP…REKH) and 508–532 (YRCD…SDKH). Disordered regions lie at residues 537 to 566 (QGFQ…PKTK), 608 to 655 (LPPG…LRPD), and 675 to 710 (RKFP…SPPP). Pro residues predominate over residues 615–628 (PGPPPPPGATPTSP). The span at 696-705 (LLGSSSDSLP) shows a compositional bias: low complexity. C2H2-type zinc fingers lie at residues 821-845 (LRCN…GAAH) and 870-894 (YHCL…TPAH). The interval 929-974 (QLRTPGKAPVTPLAEPPTPEKDAQNKTEQLASEETENKTGPSRDSA) is disordered. The span at 954 to 974 (KTEQLASEETENKTGPSRDSA) shows a compositional bias: polar residues. The C2H2-type 5 zinc finger occupies 1009 to 1032 (YRCPLCQEQLVGRPALHFHLSHLH). The disordered stretch occupies residues 1061–1171 (PTLSPLDNGQ…PAPADSRHPL (111 aa)). Positions 1120-1132 (GQPPSPAPSPVPE) are enriched in pro residues. 2 C2H2-type zinc fingers span residues 1191-1217 (YKCT…SHLH) and 1248-1272 (FKCT…SVLH). Disordered stretches follow at residues 1269–1325 (SVLH…FLSP), 1389–1408 (LPAA…LAER), and 1415–1434 (MAKE…LPNE). Basic and acidic residues predominate over residues 1279 to 1311 (TKTDSKIEGPERSQEEPKEGETEGEVGTEKKGP). Residues 1392–1401 (ATPPPPPQPP) are compositionally biased toward pro residues. The segment at 1480 to 1503 (LACGACGKLFSNMLILKTHEEHVH) adopts a C2H2-type 8 zinc-finger fold. Residues 1528 to 1591 (PPLAEPPKPP…SSRGNLPPLV (64 aa)) form a disordered region. Residues 1595–1654 (RRFSRTKFTEFQTQALQSFFETSAYPKDGEVERLASLLGLASRVVVVWFQNARQKARKNA) constitute a DNA-binding region (homeobox 1). Residues 1670-1696 (SGCRRCHATFSCVFELVRHLKKCYDDQ) form a C2H2-type 9; degenerate zinc finger. Over residues 1696 to 1724 (QTLEEEEEEAERGEEEEEVEEEEVEEEQG) the composition is skewed to acidic residues. Disordered regions lie at residues 1696–1769 (QTLE…SPAH), 1820–1860 (AATS…DKRL), 1912–2065 (ERKG…GMGQ), 2268–2327 (VQTA…NDAL), and 2398–2431 (NALL…EAGE). Residues 1728–1738 (PAGPEGPLPEP) are compositionally biased toward pro residues. Residues 1769 to 1791 (HTCDQCAISFSSQDLLTSHRRLH) form a C2H2-type 10 zinc finger. Positions 1857 to 1916 (DKRLRTTILPEQLEILYRWYMQDSNPTRKMLDCISEEVGLKKRVVQVWFQNTRARERKGQ) form a DNA-binding region, homeobox 2. The segment covering 1925 to 1939 (PSPAVKPPATATPAS) has biased composition (low complexity). Over residues 1949–1963 (KVDDGTGREAPKREA) the composition is skewed to basic and acidic residues. The span at 1991 to 2004 (TPEPPLPLLPPPPP) shows a compositional bias: pro residues. Residues 2017–2044 (SPESEACSLSAGDLSDSSASSLAEPESP) show a composition bias toward low complexity. The segment covering 2045 to 2061 (GAGGTSGGPGGGTGVPD) has biased composition (gly residues). The homeobox 3 DNA-binding region spans 2065–2124 (QRRYRTQMSSLQLKIMKACYEAYRTPTMQECEVLGEEIGLPKRVIQVWFQNARAKEKKAK). The span at 2284–2293 (DQTNTSTAGT) shows a compositional bias: polar residues. Residues 2305 to 2315 (LGDKVSSERKP) show a composition bias toward basic and acidic residues. The span at 2402–2422 (QPPPQPPEPTATAPPKPPELP) shows a compositional bias: pro residues. The segment at 2451-2471 (YLCRQCKMAFDGEAPATAHQR) adopts a C2H2-type 11; degenerate zinc-finger fold. The C2H2-type 12 zinc-finger motif lies at 2495 to 2519 (YHCLACEVLLSGREALASHLRSSAH). Residues 2551–2572 (EARLPHTDSNPKTTTTSTLLAL) are disordered. Positions 2563 to 2572 (TTTTSTLLAL) are enriched in low complexity.

It is found in the nucleus. In terms of biological role, transcriptional regulator that is critical for the regulation of pain perception and processing of noxious stimuli. The protein is Zinc finger homeobox protein 2 (ZFHX2) of Homo sapiens (Human).